The sequence spans 484 residues: Glycogen synthase (484 aa).

Lysine 15 serves as a coordination point for ADP-alpha-D-glucose.

Belongs to the glycosyltransferase 1 family. Bacterial/plant glycogen synthase subfamily.

It carries out the reaction [(1-&gt;4)-alpha-D-glucosyl](n) + ADP-alpha-D-glucose = [(1-&gt;4)-alpha-D-glucosyl](n+1) + ADP + H(+). It participates in glycan biosynthesis; glycogen biosynthesis. In terms of biological role, synthesizes alpha-1,4-glucan chains using ADP-glucose. This Geotalea daltonii (strain DSM 22248 / JCM 15807 / FRC-32) (Geobacter daltonii) protein is Glycogen synthase.